The chain runs to 48 residues: Large ribosomal subunit protein bL33B (48 aa).

This sequence belongs to the bacterial ribosomal protein bL33 family.

The sequence is that of Large ribosomal subunit protein bL33B (rpmG 2) from Mycoplasmoides gallisepticum (strain R(low / passage 15 / clone 2)) (Mycoplasma gallisepticum).